A 74-amino-acid chain; its full sequence is Defensin (74 aa).

A signal peptide spans 1 to 22 (MRGLCICLVFLLVCGLVSATAA). Positions 23-36 (APAESEVAHLRVRR) are excised as a propeptide. 3 disulfide bridges follow: Cys-40–Cys-61, Cys-47–Cys-69, and Cys-51–Cys-71.

In terms of tissue distribution, hemolymph.

The protein localises to the secreted. Antibacterial activity against Gram-positive and Gram-negative bacteria. The chain is Defensin (VSNA1) from Dermacentor variabilis (American dog tick).